Consider the following 926-residue polypeptide: Armadillo repeat-containing protein 5 (926 aa).

The span at 82-104 shows a compositional bias: low complexity; it reads PAPSQAASGSAPSSVASAGSTPG. The interval 82-111 is disordered; that stretch reads PAPSQAASGSAPSSVASAGSTPGHAPAAES. 7 ARM repeats span residues 139-179, 181-221, 223-263, 267-306, 307-354, 355-399, and 401-440; these read GACR…NLAM, PESC…NLAD, PQHR…ELSR, RACA…NLCA, QGLV…LCRE, AINR…DTGA, and GKLQ…EERT. S337 carries the phosphoserine modification. The tract at residues 472 to 516 is disordered; it reads WSPERCPMPEPSESVSPTPGQTSMSTPRTLRKPGRIPAATPEEPW. Polar residues predominate over residues 484-499; sequence ESVSPTPGQTSMSTPR. Positions 745 to 813 constitute a BTB domain; it reads PDLHFVLDSG…LHGCRGCGAA (69 aa).

As to quaternary structure, substrate-recognition component of the BCR(ARMC5) E3 ubiquitin ligase complex, at least composed of CUL3, ARMC5 and RBX1. In terms of processing, ubiquitinated by a BCR (BTB-CUL3-RBX1) E3 ubiquitin ligase complex, leading to its degradation. Deubiquitinated by USP7. As to expression, expression is high in the thymus, stomach, bone marrow and lymphatic tissues (including lymph nodes and intestinal wall). Also expressed in the adrenal gland, skin and in brain structures, with noticeable levels found in the cerebellum.

The protein resides in the nucleus. Its subcellular location is the chromosome. It is found in the cytoplasm. The protein operates within protein modification; protein ubiquitination. Substrate-recognition component of a BCR (BTB-CUL3-RBX1) E3 ubiquitin ligase complex that terminates RNA polymerase II (Pol II) transcription in the promoter-proximal region of genes. The BCR(ARMC5) complex provides a quality checkpoint during transcription elongation by driving premature transcription termination of transcripts that are unfavorably configured for transcriptional elongation: the BCR(ARMC5) complex acts by mediating ubiquitination of Pol II subunit POLR2A phosphorylated at 'Ser-5' of the C-terminal domain (CTD), leading to POLR2A degradation. The BCR(ARMC5) complex acts in parallel of the integrator complex and is specific for RNA Pol II originating from the promoter-proximal zone: it does not ubiquitinate elongation-stalled RNA Pol II. The BCR(ARMC5) complex also acts as a regulator of fatty acid desaturation by mediating ubiquitination and degradation of SCAP-free SREBF1 and SREBF2. Involved in fetal development, T-cell function and adrenal gland growth homeostasis. Plays a role in steroidogenesis, modulates steroidogenic enzymes expression and cortisol production. This Mus musculus (Mouse) protein is Armadillo repeat-containing protein 5.